The chain runs to 156 residues: Endoribonuclease YbeY (156 aa).

Residues His-122, His-126, and His-132 each contribute to the Zn(2+) site.

Belongs to the endoribonuclease YbeY family. The cofactor is Zn(2+).

The protein localises to the cytoplasm. Functionally, single strand-specific metallo-endoribonuclease involved in late-stage 70S ribosome quality control and in maturation of the 3' terminus of the 16S rRNA. In Syntrophomonas wolfei subsp. wolfei (strain DSM 2245B / Goettingen), this protein is Endoribonuclease YbeY.